The chain runs to 267 residues: Phosphatidylserine decarboxylase proenzyme (267 aa).

Catalysis depends on charge relay system; for autoendoproteolytic cleavage activity residues Asp-78, His-132, and Ser-236. The active-site Schiff-base intermediate with substrate; via pyruvic acid; for decarboxylase activity is Ser-236. Ser-236 is subject to Pyruvic acid (Ser); by autocatalysis.

Belongs to the phosphatidylserine decarboxylase family. PSD-B subfamily. Prokaryotic type I sub-subfamily. In terms of assembly, heterodimer of a large membrane-associated beta subunit and a small pyruvoyl-containing alpha subunit. Pyruvate is required as a cofactor. In terms of processing, is synthesized initially as an inactive proenzyme. Formation of the active enzyme involves a self-maturation process in which the active site pyruvoyl group is generated from an internal serine residue via an autocatalytic post-translational modification. Two non-identical subunits are generated from the proenzyme in this reaction, and the pyruvate is formed at the N-terminus of the alpha chain, which is derived from the carboxyl end of the proenzyme. The autoendoproteolytic cleavage occurs by a canonical serine protease mechanism, in which the side chain hydroxyl group of the serine supplies its oxygen atom to form the C-terminus of the beta chain, while the remainder of the serine residue undergoes an oxidative deamination to produce ammonia and the pyruvoyl prosthetic group on the alpha chain. During this reaction, the Ser that is part of the protease active site of the proenzyme becomes the pyruvoyl prosthetic group, which constitutes an essential element of the active site of the mature decarboxylase.

The protein resides in the cell membrane. The catalysed reaction is a 1,2-diacyl-sn-glycero-3-phospho-L-serine + H(+) = a 1,2-diacyl-sn-glycero-3-phosphoethanolamine + CO2. The protein operates within phospholipid metabolism; phosphatidylethanolamine biosynthesis; phosphatidylethanolamine from CDP-diacylglycerol: step 2/2. In terms of biological role, catalyzes the formation of phosphatidylethanolamine (PtdEtn) from phosphatidylserine (PtdSer). This Helicobacter pylori (strain ATCC 700392 / 26695) (Campylobacter pylori) protein is Phosphatidylserine decarboxylase proenzyme.